The chain runs to 176 residues: NAD(P)H-quinone oxidoreductase subunit 6, chloroplastic (176 aa).

Transmembrane regions (helical) follow at residues 10–30, 32–52, 61–81, 107–127, and 152–172; these read ILLV…VLLT, PIYS…FHIP, AQLL…VMFM, ILFS…IWTT, and FYLP…GAIA.

This sequence belongs to the complex I subunit 6 family. NDH is composed of at least 16 different subunits, 5 of which are encoded in the nucleus.

It localises to the plastid. The protein localises to the chloroplast thylakoid membrane. It carries out the reaction a plastoquinone + NADH + (n+1) H(+)(in) = a plastoquinol + NAD(+) + n H(+)(out). The catalysed reaction is a plastoquinone + NADPH + (n+1) H(+)(in) = a plastoquinol + NADP(+) + n H(+)(out). NDH shuttles electrons from NAD(P)H:plastoquinone, via FMN and iron-sulfur (Fe-S) centers, to quinones in the photosynthetic chain and possibly in a chloroplast respiratory chain. The immediate electron acceptor for the enzyme in this species is believed to be plastoquinone. Couples the redox reaction to proton translocation, and thus conserves the redox energy in a proton gradient. The protein is NAD(P)H-quinone oxidoreductase subunit 6, chloroplastic (ndhG) of Calycanthus floridus var. glaucus (Eastern sweetshrub).